The sequence spans 64 residues: Large ribosomal subunit protein bL35 (64 aa).

Residues 1-64 form a disordered region; the sequence is MPKNKTNSGA…RKSIKKLLGK (64 aa).

Belongs to the bacterial ribosomal protein bL35 family.

The polypeptide is Large ribosomal subunit protein bL35 (Beutenbergia cavernae (strain ATCC BAA-8 / DSM 12333 / CCUG 43141 / JCM 11478 / NBRC 16432 / NCIMB 13614 / HKI 0122)).